A 371-amino-acid polypeptide reads, in one-letter code: Dual-specificity RNA methyltransferase RlmN (371 aa).

Glu-92 functions as the Proton acceptor in the catalytic mechanism. One can recognise a Radical SAM core domain in the interval 98–337 (EADRATLCVS…VTVRKTRGDD (240 aa)). A disulfide bridge links Cys-105 with Cys-342. [4Fe-4S] cluster contacts are provided by Cys-112, Cys-116, and Cys-119. Residues 166–167 (GE), Ser-198, 220–222 (SLH), and Asn-299 each bind S-adenosyl-L-methionine. The active-site S-methylcysteine intermediate is Cys-342.

It belongs to the radical SAM superfamily. RlmN family. [4Fe-4S] cluster serves as cofactor.

It is found in the cytoplasm. It carries out the reaction adenosine(2503) in 23S rRNA + 2 reduced [2Fe-2S]-[ferredoxin] + 2 S-adenosyl-L-methionine = 2-methyladenosine(2503) in 23S rRNA + 5'-deoxyadenosine + L-methionine + 2 oxidized [2Fe-2S]-[ferredoxin] + S-adenosyl-L-homocysteine. It catalyses the reaction adenosine(37) in tRNA + 2 reduced [2Fe-2S]-[ferredoxin] + 2 S-adenosyl-L-methionine = 2-methyladenosine(37) in tRNA + 5'-deoxyadenosine + L-methionine + 2 oxidized [2Fe-2S]-[ferredoxin] + S-adenosyl-L-homocysteine. Specifically methylates position 2 of adenine 2503 in 23S rRNA and position 2 of adenine 37 in tRNAs. m2A2503 modification seems to play a crucial role in the proofreading step occurring at the peptidyl transferase center and thus would serve to optimize ribosomal fidelity. In Actinobacillus succinogenes (strain ATCC 55618 / DSM 22257 / CCUG 43843 / 130Z), this protein is Dual-specificity RNA methyltransferase RlmN.